Consider the following 477-residue polypeptide: Myc-associated zinc finger protein (477 aa).

Disordered stretches follow at residues 59 to 78 (AQSP…APAA) and 121 to 144 (TVDT…SAPA). Positions 130–140 (PPAPPPPPPAV) are enriched in pro residues. 4 C2H2-type zinc fingers span residues 190–212 (YICA…EAIH), 279–301 (HACE…KLSH), 307–329 (YQCP…VRSH), and 337–360 (YNCS…RQVH). Residue S361 is modified to Phosphoserine. The C2H2-type 5 zinc-finger motif lies at 366–388 (FKCEKCEAAFATKDRLRAHTVRH). The C2H2-type 6; atypical zinc finger occupies 392 to 413 (VPCHVCGKMLSSAYISDHMKVH).

As to quaternary structure, interacts with BPTF. In terms of tissue distribution, expressed in Purkinje cells in the brain (at protein level).

The protein resides in the nucleus. Its function is as follows. Transcriptional regulator. Acts as a transcriptional activator that binds to purine-rich GAGA sites found in the promoter of many genes including insulin I and II and islet amyloid polypeptide. This is Myc-associated zinc finger protein (Maz) from Mus musculus (Mouse).